Consider the following 407-residue polypeptide: Endo-1,4-beta-xylanase (407 aa).

The N-terminal stretch at Met-1–Ala-28 is a signal peptide. A GH10 domain is found at Ala-42–His-406. The active-site Proton donor is Glu-187. The Nucleophile role is filled by Glu-293.

This sequence belongs to the glycosyl hydrolase 10 (cellulase F) family.

It is found in the secreted. It catalyses the reaction Endohydrolysis of (1-&gt;4)-beta-D-xylosidic linkages in xylans.. Its pathway is glycan degradation; xylan degradation. The chain is Endo-1,4-beta-xylanase from Geobacillus stearothermophilus (Bacillus stearothermophilus).